Reading from the N-terminus, the 375-residue chain is Glutamate 5-kinase (375 aa).

Residue Lys13 coordinates ATP. Residues Ser54, Asp141, and Asn153 each contribute to the substrate site. Residues 173–174 (TD) and 216–222 (TGGMATK) each bind ATP. Positions 281–359 (TGKIFIDAGA…EAIAAVLGYV (79 aa)) constitute a PUA domain.

This sequence belongs to the glutamate 5-kinase family.

It is found in the cytoplasm. It catalyses the reaction L-glutamate + ATP = L-glutamyl 5-phosphate + ADP. It functions in the pathway amino-acid biosynthesis; L-proline biosynthesis; L-glutamate 5-semialdehyde from L-glutamate: step 1/2. Functionally, catalyzes the transfer of a phosphate group to glutamate to form L-glutamate 5-phosphate. This chain is Glutamate 5-kinase, found in Synechocystis sp. (strain ATCC 27184 / PCC 6803 / Kazusa).